We begin with the raw amino-acid sequence, 310 residues long: 4-hydroxythreonine-4-phosphate dehydrogenase (310 aa).

Threonine 129 provides a ligand contact to substrate. The a divalent metal cation site is built by histidine 158, histidine 202, and histidine 250. The substrate site is built by lysine 258, asparagine 267, and arginine 276.

This sequence belongs to the PdxA family. In terms of assembly, homodimer. A divalent metal cation serves as cofactor.

It localises to the cytoplasm. The catalysed reaction is 4-(phosphooxy)-L-threonine + NAD(+) = 3-amino-2-oxopropyl phosphate + CO2 + NADH. Its pathway is cofactor biosynthesis; pyridoxine 5'-phosphate biosynthesis; pyridoxine 5'-phosphate from D-erythrose 4-phosphate: step 4/5. Its function is as follows. Catalyzes the NAD(P)-dependent oxidation of 4-(phosphooxy)-L-threonine (HTP) into 2-amino-3-oxo-4-(phosphooxy)butyric acid which spontaneously decarboxylates to form 3-amino-2-oxopropyl phosphate (AHAP). The protein is 4-hydroxythreonine-4-phosphate dehydrogenase of Hydrogenobaculum sp. (strain Y04AAS1).